The chain runs to 125 residues: Ribonuclease P protein component (125 aa).

Belongs to the RnpA family. Consists of a catalytic RNA component (M1 or rnpB) and a protein subunit.

The enzyme catalyses Endonucleolytic cleavage of RNA, removing 5'-extranucleotides from tRNA precursor.. RNaseP catalyzes the removal of the 5'-leader sequence from pre-tRNA to produce the mature 5'-terminus. It can also cleave other RNA substrates such as 4.5S RNA. The protein component plays an auxiliary but essential role in vivo by binding to the 5'-leader sequence and broadening the substrate specificity of the ribozyme. This Rhodococcus jostii (strain RHA1) protein is Ribonuclease P protein component.